A 178-amino-acid chain; its full sequence is Putative metal-dependent hydrolase GTNG_0529 (178 aa).

Zn(2+)-binding residues include His-68, His-161, and His-165.

Belongs to the metal hydrolase YfiT family. In terms of assembly, homodimer. Zn(2+) is required as a cofactor.

Its subcellular location is the cytoplasm. Functionally, possible metal-dependent hydrolase. In Geobacillus thermodenitrificans (strain NG80-2), this protein is Putative metal-dependent hydrolase GTNG_0529.